A 726-amino-acid polypeptide reads, in one-letter code: Catalase-peroxidase (726 aa).

A cross-link (tryptophyl-tyrosyl-methioninium (Trp-Tyr) (with M-234)) is located at residues 85–208 (WHSAGSYRIH…FAATEMGLIY (124 aa)). The Proton acceptor role is filled by His86. A cross-link (tryptophyl-tyrosyl-methioninium (Tyr-Met) (with W-85)) is located at residues 208-234 (YVNPEGPMGNPDPSGSAKEIRLAFTRM). A heme b-binding site is contributed by His249.

It belongs to the peroxidase family. Peroxidase/catalase subfamily. Homodimer or homotetramer. Requires heme b as cofactor. In terms of processing, formation of the three residue Trp-Tyr-Met cross-link is important for the catalase, but not the peroxidase activity of the enzyme.

It catalyses the reaction H2O2 + AH2 = A + 2 H2O. The enzyme catalyses 2 H2O2 = O2 + 2 H2O. Bifunctional enzyme with both catalase and broad-spectrum peroxidase activity. The polypeptide is Catalase-peroxidase (Pseudothermotoga lettingae (strain ATCC BAA-301 / DSM 14385 / NBRC 107922 / TMO) (Thermotoga lettingae)).